Reading from the N-terminus, the 705-residue chain is Elongation factor G 2 (705 aa).

Positions 8–290 (ELYRNIGISA…AVLDYLPSPL (283 aa)) constitute a tr-type G domain. GTP contacts are provided by residues 17-24 (AHIDAGKT), 88-92 (DTPGH), and 142-145 (NKMD).

The protein belongs to the TRAFAC class translation factor GTPase superfamily. Classic translation factor GTPase family. EF-G/EF-2 subfamily.

The protein localises to the cytoplasm. Catalyzes the GTP-dependent ribosomal translocation step during translation elongation. During this step, the ribosome changes from the pre-translocational (PRE) to the post-translocational (POST) state as the newly formed A-site-bound peptidyl-tRNA and P-site-bound deacylated tRNA move to the P and E sites, respectively. Catalyzes the coordinated movement of the two tRNA molecules, the mRNA and conformational changes in the ribosome. This chain is Elongation factor G 2, found in Bordetella avium (strain 197N).